Reading from the N-terminus, the 131-residue chain is Large ribosomal subunit protein uL22c (131 aa).

This sequence belongs to the universal ribosomal protein uL22 family. In terms of assembly, part of the 50S ribosomal subunit.

The protein resides in the plastid. Functionally, this protein binds specifically to 23S rRNA. In terms of biological role, the globular domain of the protein is located near the polypeptide exit tunnel on the outside of the subunit, while an extended beta-hairpin is found that lines the wall of the exit tunnel in the center of the 70S ribosome. The protein is Large ribosomal subunit protein uL22c (rpl22) of Aneura mirabilis (Parasitic liverwort).